We begin with the raw amino-acid sequence, 252 residues long: MALIEDRLFTRIKNRVGRAIADYNLIEEGDRIAVAVSGGKDSYTLLHILETLRKRAPVRYEIMAINIDSGYPGFRADIIEEHLREHGFVAHMEKTDHYGIIKEKRRPDSSYCSICARLKRGVLYGLAQRYNCNKLALGHHMDDFIETLLLNQFFVGSLKAMAPSMLADNGLTTVIRPLVYVPEEDIIPFSRNNRFPVLCCCCPVCGSADQQRKRMKELLKTLEKENPFVKKSLLKALANVQPRYLLDRRVKY.

A PP-loop motif motif is present at residues 37 to 42 (SGGKDS). C112, C115, and C202 together coordinate [4Fe-4S] cluster.

The protein belongs to the TtcA family. Homodimer. Requires Mg(2+) as cofactor. [4Fe-4S] cluster serves as cofactor.

It is found in the cytoplasm. It carries out the reaction cytidine(32) in tRNA + S-sulfanyl-L-cysteinyl-[cysteine desulfurase] + AH2 + ATP = 2-thiocytidine(32) in tRNA + L-cysteinyl-[cysteine desulfurase] + A + AMP + diphosphate + H(+). The protein operates within tRNA modification. Catalyzes the ATP-dependent 2-thiolation of cytidine in position 32 of tRNA, to form 2-thiocytidine (s(2)C32). The sulfur atoms are provided by the cysteine/cysteine desulfurase (IscS) system. In Geotalea uraniireducens (strain Rf4) (Geobacter uraniireducens), this protein is tRNA-cytidine(32) 2-sulfurtransferase.